The primary structure comprises 799 residues: Putative aconitate hydratase, mitochondrial (799 aa).

A mitochondrion-targeting transit peptide spans 1-32 (MVRQLVWQRATASRRLAPKCLSPQQLFARRGL). Substrate is bound by residues Q108 and 201 to 203 (DSH). The [4Fe-4S] cluster site is built by C399, C462, and C465. Substrate is bound by residues R489 and R494. Positions 538 to 564 (KFRPPQGSDLPSAGFADGNPALQPSAG) are disordered. 685 to 686 (AR) is a binding site for substrate.

Belongs to the aconitase/IPM isomerase family.

It localises to the mitochondrion. Functionally, has no detectable activity towards cis-acontiate or cis-homoaconitate. This Aspergillus fumigatus (strain ATCC MYA-4609 / CBS 101355 / FGSC A1100 / Af293) (Neosartorya fumigata) protein is Putative aconitate hydratase, mitochondrial (acoB).